The chain runs to 394 residues: Putative gustatory receptor 22a (394 aa).

At 1 to 16 the chain is on the cytoplasmic side; it reads MSQPKRIHRICKGLAR. The chain crosses the membrane as a helical span at residues 17-37; sequence FTIRATLYGSWVLGLFPFTFD. Residues 38–47 are Extracellular-facing; sequence SRKRRLNRSK. Asn44 is a glycosylation site (N-linked (GlcNAc...) asparagine). Residues 48-68 traverse the membrane as a helical segment; it reads WLLAYGLVLNLTLLVLSMLPS. Topologically, residues 69 to 148 are cytoplasmic; the sequence is TDDHNSVKVE…HTFNRYVIEK (80 aa). Residues 149–169 form a helical membrane-spanning segment; the sequence is GLVIILEIGSSLVLYFGIPNS. Lys170 is a topological domain (extracellular). A helical transmembrane segment spans residues 171 to 191; it reads IVVYEAVCIYIVQLEVLMVVM. The Cytoplasmic segment spans residues 192 to 256; that stretch reads HFHLAVIYIY…TAIYDIQVTL (65 aa). Residues 257 to 277 form a helical membrane-spanning segment; that stretch reads FMATLFSVNIIVGHVLVICWI. N-linked (GlcNAc...) asparagine glycosylation is present at Asn278. Residues 278–281 are Extracellular-facing; the sequence is NITR. Residues 282–302 traverse the membrane as a helical segment; that stretch reads FSLLVIFLLFPQALIINFWDL. Over 303–361 the chain is Cytoplasmic; it reads WQGIAFCDLAESTGKKTSMILKLFNDMENMDQETERRVTEFTLFCSHRRLKVCHLGLLD. Residues 362-382 traverse the membrane as a helical segment; the sequence is INYEMGFRMIITNILYVVFLV. The Extracellular segment spans residues 383-394; it reads QFDYMNLKFKTD.

The protein belongs to the insect chemoreceptor superfamily. Gustatory receptor (GR) family. Gr22e subfamily. Expressed in neurons of the terminal external chemosensory organ of larvae.

Its subcellular location is the cell membrane. Its function is as follows. Probable gustatory receptor which mediates acceptance or avoidance behavior, depending on its substrates. In Drosophila melanogaster (Fruit fly), this protein is Putative gustatory receptor 22a (Gr22a).